A 159-amino-acid chain; its full sequence is Ribosomal RNA large subunit methyltransferase H (159 aa).

The S-adenosyl-L-methionine site is built by leucine 76 and glycine 108.

This sequence belongs to the RNA methyltransferase RlmH family. As to quaternary structure, homodimer.

It localises to the cytoplasm. It carries out the reaction pseudouridine(1915) in 23S rRNA + S-adenosyl-L-methionine = N(3)-methylpseudouridine(1915) in 23S rRNA + S-adenosyl-L-homocysteine + H(+). Specifically methylates the pseudouridine at position 1915 (m3Psi1915) in 23S rRNA. The protein is Ribosomal RNA large subunit methyltransferase H of Levilactobacillus brevis (strain ATCC 367 / BCRC 12310 / CIP 105137 / JCM 1170 / LMG 11437 / NCIMB 947 / NCTC 947) (Lactobacillus brevis).